The primary structure comprises 461 residues: Toxin CfTX-B (461 aa).

Positions 1–24 are cleaved as a signal peptide; that stretch reads MDPRISSRLRALALLVFVISITDG. Positions 25–31 are excised as a propeptide; it reads IPNRAKR.

It belongs to the jellyfish toxin family. Type II subfamily. Oligomer. Post-translationally, contains 2 disulfide bonds. As to expression, nematocytes.

The protein resides in the secreted. Its subcellular location is the nematocyst. The protein localises to the target cell membrane. Functionally, the fraction containing this toxin and CfTX-B shows potent hemolytic activity. This fraction causes minor effects on the cardiovascular system of anesthetized rats (at 25 ug/kg), since it has no significant effects on heart rate but produces relatively small increases in mean arterial pressure. This Chironex fleckeri (Australian box jellyfish) protein is Toxin CfTX-B.